Reading from the N-terminus, the 844-residue chain is Translation initiation factor IF-2 (844 aa).

Residues 1 to 11 (MTEDVKADAPK) show a composition bias toward basic and acidic residues. Disordered stretches follow at residues 1–48 (MTED…VKTD) and 79–249 (RLEA…GTAL). Positions 21–30 (TTVSSTTTGG) are enriched in low complexity. Positions 79-161 (RLEAEKAATK…AAEEAKRYAE (83 aa)) are enriched in basic and acidic residues. A compositionally biased stretch (acidic residues) spans 162–175 (ADDSDNESSSEDYS). Positions 200-210 (RGKNKVAKAKK) are enriched in basic residues. Residues 211-237 (GGRDDENSKNSKNERESNRKNQKDAKF) are compositionally biased toward basic and acidic residues. The 171-residue stretch at 343–513 (TRAPVVTIMG…LLQSEVLELT (171 aa)) folds into the tr-type G domain. The segment at 352 to 359 (GHVDHGKT) is G1. Position 352 to 359 (352 to 359 (GHVDHGKT)) interacts with GTP. A G2 region spans residues 377 to 381 (GITQH). A G3 region spans residues 399–402 (DTPG). Residues 399 to 403 (DTPGH) and 453 to 456 (NKID) each bind GTP. A G4 region spans residues 453 to 456 (NKID). Residues 489–491 (SAK) form a G5 region.

Belongs to the TRAFAC class translation factor GTPase superfamily. Classic translation factor GTPase family. IF-2 subfamily.

It is found in the cytoplasm. Its function is as follows. One of the essential components for the initiation of protein synthesis. Protects formylmethionyl-tRNA from spontaneous hydrolysis and promotes its binding to the 30S ribosomal subunits. Also involved in the hydrolysis of GTP during the formation of the 70S ribosomal complex. This is Translation initiation factor IF-2 from Haemophilus influenzae (strain 86-028NP).